The chain runs to 166 residues: MFPMVTEFMNYGQQTVRAARYIGQGFIITLSHANRLPVTIQYPYEKLITSERFRGRIHFEFDKCIACEVCVRVCPIDLPVVDWKLETDIRKKRLLNYSIDFGICIFCGNCVEYCPTNCLSMTEEYELSTYDRHELNYNQIALGRLPMSIIDDYTIRTILNLPEIKT.

4Fe-4S ferredoxin-type domains are found at residues 55-84 (GRIHFEFDKCIACEVCVRVCPIDLPVVDWK) and 95-124 (LNYSIDFGICIFCGNCVEYCPTNCLSMTEE). Positions 64, 67, 70, 74, 104, 107, 110, and 114 each coordinate [4Fe-4S] cluster.

This sequence belongs to the complex I 23 kDa subunit family. NDH is composed of at least 16 different subunits, 5 of which are encoded in the nucleus. It depends on [4Fe-4S] cluster as a cofactor.

The protein resides in the plastid. The protein localises to the chloroplast thylakoid membrane. The catalysed reaction is a plastoquinone + NADH + (n+1) H(+)(in) = a plastoquinol + NAD(+) + n H(+)(out). It catalyses the reaction a plastoquinone + NADPH + (n+1) H(+)(in) = a plastoquinol + NADP(+) + n H(+)(out). NDH shuttles electrons from NAD(P)H:plastoquinone, via FMN and iron-sulfur (Fe-S) centers, to quinones in the photosynthetic chain and possibly in a chloroplast respiratory chain. The immediate electron acceptor for the enzyme in this species is believed to be plastoquinone. Couples the redox reaction to proton translocation, and thus conserves the redox energy in a proton gradient. This is NAD(P)H-quinone oxidoreductase subunit I, chloroplastic from Stevia rebaudiana (Stevia).